The chain runs to 283 residues: RNase adapter protein RapZ (283 aa).

8–15 is a binding site for ATP; the sequence is GRSGSGKS. 56–59 contacts GTP; the sequence is DVRN. Residues 266–283 are RNA-binding; that stretch reads RARGKNVQSRHRTLEKRK.

This sequence belongs to the RapZ-like family. RapZ subfamily. In terms of assembly, homotrimer.

Functionally, modulates the synthesis of GlmS, by affecting the processing and stability of the regulatory small RNA GlmZ. When glucosamine-6-phosphate (GlcN6P) concentrations are high in the cell, RapZ binds GlmZ and targets it to cleavage by RNase E. Consequently, GlmZ is inactivated and unable to activate GlmS synthesis. Under low GlcN6P concentrations, RapZ is sequestered and inactivated by an other regulatory small RNA, GlmY, preventing GlmZ degradation and leading to synthesis of GlmS. In Yersinia enterocolitica serotype O:8 / biotype 1B (strain NCTC 13174 / 8081), this protein is RNase adapter protein RapZ.